The chain runs to 440 residues: 3-phosphoshikimate 1-carboxyvinyltransferase (440 aa).

Positions 19, 20, and 24 each coordinate 3-phosphoshikimate. Position 19 (K19) interacts with phosphoenolpyruvate. 2 residues coordinate phosphoenolpyruvate: G92 and R121. 4 residues coordinate 3-phosphoshikimate: S166, Q168, D315, and K342. Q168 is a phosphoenolpyruvate binding site. The Proton acceptor role is filled by D315. 2 residues coordinate phosphoenolpyruvate: R346 and R399.

This sequence belongs to the EPSP synthase family. In terms of assembly, monomer.

It is found in the cytoplasm. The catalysed reaction is 3-phosphoshikimate + phosphoenolpyruvate = 5-O-(1-carboxyvinyl)-3-phosphoshikimate + phosphate. Its pathway is metabolic intermediate biosynthesis; chorismate biosynthesis; chorismate from D-erythrose 4-phosphate and phosphoenolpyruvate: step 6/7. Functionally, catalyzes the transfer of the enolpyruvyl moiety of phosphoenolpyruvate (PEP) to the 5-hydroxyl of shikimate-3-phosphate (S3P) to produce enolpyruvyl shikimate-3-phosphate and inorganic phosphate. In Leptospira borgpetersenii serovar Hardjo-bovis (strain JB197), this protein is 3-phosphoshikimate 1-carboxyvinyltransferase.